The chain runs to 572 residues: Probable terpene synthase 11 (572 aa).

Positions 317, 321, and 469 each coordinate Mg(2+). The DDXXD motif signature appears at 317-321; that stretch reads DDIFD.

Belongs to the terpene synthase family. Requires Mg(2+) as cofactor.

Functionally, probable sesquiterpene synthase. The protein is Probable terpene synthase 11 (TPS11) of Ricinus communis (Castor bean).